We begin with the raw amino-acid sequence, 565 residues long: Tyrosine-protein phosphatase non-receptor type 5 (565 aa).

Residues 1–16 are compositionally biased toward basic and acidic residues; sequence MNYEGARSERENHAAD. Residues 1 to 80 form a disordered region; the sequence is MNYEGARSER…KPPPRGAGSH (80 aa). A compositionally biased stretch (pro residues) spans 56–75; it reads MPPPPPPSPPSDPAQKPPPR. The next 2 helical transmembrane spans lie at 88–108 and 146–166; these read LCLF…FSGY and LLLV…WHLL. The disordered stretch occupies residues 169–189; the sequence is PPEPPTPLPPEDRRQSVSRQP. Ser-245 bears the Phosphoserine; by PKA mark. Thr-255 carries the phosphothreonine; by MAPK modification. Ser-268 carries the phosphoserine; by MAPK modification. Residues 300–555 form the Tyrosine-protein phosphatase domain; the sequence is LQAEFFEIPM…QFVHHVMSLY (256 aa). Substrate-binding positions include Asp-461, 496–502, and Gln-540; that span reads CSAGIGR. Cys-496 acts as the Phosphocysteine intermediate in catalysis.

Belongs to the protein-tyrosine phosphatase family. Non-receptor class subfamily. In terms of processing, phosphorylation at Ser-245 by PKA deactivates PTPN5. Phosphorylation at Thr-255 and Ser-268 by MAPKs stabilizes the phosphatase, dephosphorylation of these sites results in ubiquitin-mediated degradation of the active phosphatase.

The protein resides in the endoplasmic reticulum membrane. It carries out the reaction O-phospho-L-tyrosyl-[protein] + H2O = L-tyrosyl-[protein] + phosphate. Its function is as follows. May regulate the activity of several effector molecules involved in synaptic plasticity and neuronal cell survival, including MAPKs, Src family kinases and NMDA receptors. The polypeptide is Tyrosine-protein phosphatase non-receptor type 5 (PTPN5) (Homo sapiens (Human)).